The primary structure comprises 82 residues: Small ribosomal subunit protein bS16 (82 aa).

The protein belongs to the bacterial ribosomal protein bS16 family.

The protein is Small ribosomal subunit protein bS16 of Clostridium botulinum (strain Okra / Type B1).